We begin with the raw amino-acid sequence, 186 residues long: Ribosome-recycling factor (186 aa).

The protein belongs to the RRF family.

It localises to the cytoplasm. Functionally, responsible for the release of ribosomes from messenger RNA at the termination of protein biosynthesis. May increase the efficiency of translation by recycling ribosomes from one round of translation to another. The protein is Ribosome-recycling factor of Bartonella henselae (strain ATCC 49882 / DSM 28221 / CCUG 30454 / Houston 1) (Rochalimaea henselae).